The primary structure comprises 285 residues: Shikimate dehydrogenase (NADP(+)) (285 aa).

Residues serine 20–serine 22 and serine 67 contribute to the shikimate site. Lysine 71 serves as the catalytic Proton acceptor. Residue glutamate 83 participates in NADP(+) binding. Shikimate is bound by residues asparagine 92 and aspartate 107. Residues glycine 129 to alanine 133 and methionine 227 each bind NADP(+). Tyrosine 229 contacts shikimate. Residue glycine 250 coordinates NADP(+).

It belongs to the shikimate dehydrogenase family. In terms of assembly, homodimer.

The enzyme catalyses shikimate + NADP(+) = 3-dehydroshikimate + NADPH + H(+). The protein operates within metabolic intermediate biosynthesis; chorismate biosynthesis; chorismate from D-erythrose 4-phosphate and phosphoenolpyruvate: step 4/7. Its function is as follows. Involved in the biosynthesis of the chorismate, which leads to the biosynthesis of aromatic amino acids. Catalyzes the reversible NADPH linked reduction of 3-dehydroshikimate (DHSA) to yield shikimate (SA). The sequence is that of Shikimate dehydrogenase (NADP(+)) from Streptococcus gordonii (strain Challis / ATCC 35105 / BCRC 15272 / CH1 / DL1 / V288).